The primary structure comprises 133 residues: Ribosome-binding factor A (133 aa).

The protein belongs to the RbfA family. In terms of assembly, monomer. Binds 30S ribosomal subunits, but not 50S ribosomal subunits or 70S ribosomes.

Its subcellular location is the cytoplasm. Its function is as follows. One of several proteins that assist in the late maturation steps of the functional core of the 30S ribosomal subunit. Associates with free 30S ribosomal subunits (but not with 30S subunits that are part of 70S ribosomes or polysomes). Required for efficient processing of 16S rRNA. May interact with the 5'-terminal helix region of 16S rRNA. The protein is Ribosome-binding factor A of Bordetella pertussis (strain Tohama I / ATCC BAA-589 / NCTC 13251).